The following is a 203-amino-acid chain: Probable nicotinate-nucleotide adenylyltransferase (203 aa).

The protein belongs to the NadD family.

The enzyme catalyses nicotinate beta-D-ribonucleotide + ATP + H(+) = deamido-NAD(+) + diphosphate. Its pathway is cofactor biosynthesis; NAD(+) biosynthesis; deamido-NAD(+) from nicotinate D-ribonucleotide: step 1/1. Catalyzes the reversible adenylation of nicotinate mononucleotide (NaMN) to nicotinic acid adenine dinucleotide (NaAD). In Dictyoglomus turgidum (strain DSM 6724 / Z-1310), this protein is Probable nicotinate-nucleotide adenylyltransferase.